Here is a 329-residue protein sequence, read N- to C-terminus: MSAAILLAPGDVIKRSSEELKQRQIQINLVDWMESEGGKEDKTEPKEESKAEGSKDGEGTQSESGQKEEGGKETKDADVDRRIHTAVGSGSGTKGSGERANENANRGDGKVGGGGGDADAGVGATGTNGGRWVVLTEEIARAIESKYGTKIDVYRDDVPAQIIEVERSLQKELGISREGVAEQTERLRDLRRKEKNGTHAKAVERGGRKQRKKAHGDAQREGVEEEKTSEEPARIGITIEGVMSQKKLLSMIGGVERKMAPIGARESAVMLVSNSIKDVVRATAYFTAPTGDPHWKEVAREASKKKNILAYTSTGGDVKTEFLHLIDHL.

Disordered regions lie at residues Ile-27–Gly-130 and Asp-189–Pro-232. Composition is skewed to basic and acidic residues over residues Glu-36–Glu-58, Gly-65–Ile-83, and Ser-96–Gly-109. Residue Lys-110 participates in ATP binding. Over residues Lys-110–Gly-129 the composition is skewed to gly residues. Basic and acidic residues-rich tracts occupy residues Asp-189–Gly-207 and His-215–Pro-232.

The protein belongs to the reoviruses VP6 family. In terms of assembly, homohexamer.

The protein localises to the virion. It catalyses the reaction ATP + H2O = ADP + phosphate + H(+). Its function is as follows. ATP dependent RNA helicase essential for RNA packaging and viral transcription. Possesses ss- and dsRNA-binding capacity. The sequence is that of Helicase VP6-A (Segment-9) from Antilocapra americana (Pronghorn).